Consider the following 284-residue polypeptide: MEKILALESTVIAHGLPFPINIDTAVELEELAAETGCSAKTIGIIAGQIKVGLSREEIVQIASRKDVLKIGTAEIPFALAKKMWAATTVSATMRIAHLNNIKVFATGGIGGVHKIDQWDVSQDLAELSRTRMIVVSAGPKSILDLRSTVEMLETFQITVVGYKTDELPAFYCKSTSIHINRVDSFEEIASIFLFKEKFNLPGAVLVFNPIPDEHAIEVEQFEEWYRLSEHDLDASSVKGKGVTPFLLSRLAHYSKGKTVRSNVELLKNNVKVACEILNQLSKMQ.

Glu8 (proton donor) is an active-site residue. 2 residues coordinate substrate: Lys69 and Val89. Asp119 lines the Mn(2+) pocket. Residue 121-123 participates in substrate binding; sequence SQD. Lys140 serves as the catalytic Nucleophile.

Belongs to the pseudouridine-5'-phosphate glycosidase family. In terms of assembly, homotrimer. Requires Mn(2+) as cofactor.

The catalysed reaction is D-ribose 5-phosphate + uracil = psi-UMP + H2O. Functionally, catalyzes the reversible cleavage of pseudouridine 5'-phosphate (PsiMP) to ribose 5-phosphate and uracil. Functions biologically in the cleavage direction, as part of a pseudouridine degradation pathway. This chain is Pseudouridine-5'-phosphate glycosidase, found in Pseudothermotoga lettingae (strain ATCC BAA-301 / DSM 14385 / NBRC 107922 / TMO) (Thermotoga lettingae).